The chain runs to 144 residues: Leghemoglobin-1 (144 aa).

In terms of domain architecture, Globin spans 2–144 (GFTEKQEALV…DGLATAIKAA (143 aa)). 2 positions are modified to nitrated tyrosine: Tyr25 and Tyr30. Ser45 is a binding site for heme b. Residue Ser45 is modified to Phosphoserine. Residue His62 participates in O2 binding. Heme b is bound by residues Lys65, His93, and Lys96. Tyr134 carries the nitrated tyrosine modification.

The protein belongs to the plant globin family. In terms of assembly, monomer. Nitrated in effective nodules and particularly in hypoxic conditions; this mechanism may play a protective role in the symbiosis by buffering toxic peroxynitrite NO(2)(-). Nitration level decrease during nodule senescence. Post-translationally, phosphorylation at Ser-45 disrupts the molecular environment of its porphyrin ring oxygen binding pocket, thus leading to a reduced oxygen consumption and to the delivery of oxygen O(2) to symbiosomes. As to expression, root nodules.

The protein resides in the cytoplasm. The protein localises to the cytosol. It localises to the nucleus. Leghemoglobin that reversibly binds oxygen O(2) through a pentacoordinated heme iron. In root nodules, facilitates the diffusion of oxygen to the bacteroids while preventing the bacterial nitrogenase from being inactivated by buffering dioxygen, nitric oxide and carbon monoxide, and promoting the formation of reactive oxygen species (ROS, e.g. H(2)O(2)). This role is essential for symbiotic nitrogen fixation (SNF). The polypeptide is Leghemoglobin-1 (Vicia faba (Broad bean)).